The following is a 372-amino-acid chain: Protein zntB (372 aa).

3 helical membrane passes run 15–35 (LIMC…VIFI), 42–62 (LLGH…FMDL), and 70–90 (IGFY…AVIL). The segment at 99–166 (ESGDSNHAHS…IAKSKNKKKS (68 aa)) is disordered. The span at 114-124 (IEKHSSEKKEV) shows a compositional bias: basic and acidic residues. Residues 133–167 (NGKDKKQKQQKQKQQKQQQQQKQNIAKSKNKKKSK) adopt a coiled-coil conformation. Residues 137 to 146 (KKQKQQKQKQ) are compositionally biased toward basic residues. Positions 147-159 (QKQQQQQKQNIAK) are enriched in low complexity. Helical transmembrane passes span 170 to 192 (YLNS…EGVA), 207 to 229 (LMLA…IFSA), 237 to 257 (FKYC…FGLI), 271 to 291 (LAAV…PAAF), and 301 to 321 (FSNI…HSML). Residues 328 to 372 (AGDGGHGHSHGGHGHSHGHGHSHGGHSHDSQHVESPQSSSFNAFA) are disordered. Positions 334 to 352 (GHSHGGHGHSHGHGHSHGG) are enriched in basic residues. A compositionally biased stretch (polar residues) spans 360 to 372 (VESPQSSSFNAFA).

Belongs to the ZIP transporter (TC 2.A.5) family. ZupT subfamily.

The protein resides in the membrane. In terms of biological role, may transport divalent cations. May participate, with dstA, in the regulation of the differentiation of stalk cells during development. This chain is Protein zntB (zntB), found in Dictyostelium discoideum (Social amoeba).